The primary structure comprises 627 residues: Pentatricopeptide repeat-containing protein At2g35030, mitochondrial (627 aa).

The N-terminal 44 residues, 1-44 (MQSRALSRLRSYYKRSSVFPSSDNDRSVQLFNLVRSIYSSSSRP), are a transit peptide targeting the mitochondrion. PPR repeat units lie at residues 45–75 (RVPQ…LPER), 76–110 (DVVT…KNVV), 111–138 (TWTA…MPER), 139–173 (NVVS…NIVS), 174–200 (WNSM…MPRR), 201–235 (DVVS…NIIS), 236–262 (WNAM…MPER), 263–293 (DFAS…MPEK), 294–328 (NVIS…GSVK), 330–360 (NVGT…ISKS), 365–396 (NEIV…LVCQ), 398–432 (DLIS…GFKP), 433–467 (SAVT…ESLP), and 469–499 (REEH…DDAR). Residues 504 to 579 (FYGAILSACN…QPGCSWVKVG (76 aa)) are type E motif. Residues 580–610 (KQNHLFVVGDKSHPQFEALDSILSDLRNKMR) are type E(+) motif.

Belongs to the PPR family. PCMP-E subfamily.

The protein resides in the mitochondrion. This is Pentatricopeptide repeat-containing protein At2g35030, mitochondrial (PCMP-E15) from Arabidopsis thaliana (Mouse-ear cress).